The chain runs to 195 residues: Glucagon family neuropeptides (195 aa).

Positions 1 to 20 (MAKSSRATLALLIYGILMRY) are cleaved as a signal peptide. Positions 21 to 82 (SQCTPIGMGF…YYPPERRAET (62 aa)) are excised as a propeptide. The interval 113-132 (VGEEEEDEEDSEPLSKRHSD) is disordered. Acidic residues predominate over residues 115 to 124 (EEEEDEEDSE). Position 167 is a lysine amide (Lys167). A propeptide spanning residues 171 to 195 (LVVPSVWTGIRDTVIITPEKRGKRY) is cleaved from the precursor.

It belongs to the glucagon family. In terms of tissue distribution, brain, testis, ovary and stomach. Not pancreas, pituitary, muscle and liver.

It localises to the secreted. Its function is as follows. Primary role of GHRH is to release GH from the pituitary. In terms of biological role, PACAP plays pivotal roles as a neurotransmitter and/or a neuromodulator. This is Glucagon family neuropeptides from Clarias macrocephalus (Bighead catfish).